Here is a 471-residue protein sequence, read N- to C-terminus: Ubiquitin-conjugating enzyme E2 variant 3 (471 aa).

The 144-residue stretch at 2 to 145 (EFDCEGLRRL…QEELPMYSLS (144 aa)) folds into the UEV domain. Position 191-219 (191-219 (GELGIACTLAISAKGIADRLVLLDLSEGT)) interacts with NAD(+).

It in the N-terminal section; belongs to the ubiquitin-conjugating enzyme family. UEV subfamily. In the C-terminal section; belongs to the LDH/MDH superfamily. Homodimer. In terms of tissue distribution, colon, colon carcinoma cell lines, normal cervical epithelium, carcinomas of the uterine cervix and peripheral blood leukocytes.

Its function is as follows. Possible negative regulator of polyubiquitination. This chain is Ubiquitin-conjugating enzyme E2 variant 3, found in Homo sapiens (Human).